The primary structure comprises 29 residues: Dermaseptin-J5 (29 aa).

A Valine amide modification is found at Val29.

In terms of tissue distribution, expressed by the skin glands.

The protein localises to the secreted. Has antimicrobial activity. The polypeptide is Dermaseptin-J5 (Phasmahyla jandaia (Jandaia leaf frog)).